An 82-amino-acid chain; its full sequence is Defensin-like protein 75 (82 aa).

A signal peptide spans 1-26 (MAKIKSLDVITVAIILLLVIADQATA). 4 cysteine pairs are disulfide-bonded: C33–C66, C37–C55, C41–C64, and C45–C65.

The protein belongs to the DEFL family.

Its subcellular location is the secreted. The chain is Defensin-like protein 75 (LCR45) from Arabidopsis thaliana (Mouse-ear cress).